The primary structure comprises 623 residues: Leucine aminopeptidase 2 (623 aa).

The disordered stretch occupies residues 1 to 23 (MRRCTKNSRSTNPPRDPNTLSNY). Residues 7-23 (NSRSTNPPRDPNTLSNY) show a composition bias toward polar residues. A peptide is bound by residues 145–147 (QCQ) and 277–282 (PYGGME). A Zn(2+)-binding site is contributed by H306. The active-site Proton acceptor is the E307. The Zn(2+) site is built by H310 and E329. Residue Y394 is the Proton donor of the active site.

The protein belongs to the peptidase M1 family. It depends on Zn(2+) as a cofactor.

The protein resides in the cytoplasm. It localises to the nucleus. The catalysed reaction is an epoxide + H2O = an ethanediol. In terms of biological role, aminopeptidase that preferentially cleaves di- and tripeptides. Also has low epoxide hydrolase activity (in vitro). Can hydrolyze the epoxide leukotriene LTA(4) but it forms preferentially 5,6-dihydroxy-7,9,11,14-eicosatetraenoic acid rather than the cytokine leukotriene B(4) as the product compared to the homologous mammalian enzyme (in vitro). The polypeptide is Leucine aminopeptidase 2 (Ajellomyces capsulatus (strain NAm1 / WU24) (Darling's disease fungus)).